A 59-amino-acid chain; its full sequence is Excisionase (59 aa).

Its function is as follows. Excisionase and integrase are necessary for the excision of prophage from the host genome by site-specific recombination at the att site. The polypeptide is Excisionase (xis) (Staphylococcus phage L54a (Bacteriophage L54a)).